Here is a 269-residue protein sequence, read N- to C-terminus: tRNA pseudouridine synthase A (269 aa).

The active-site Nucleophile is D55. Position 111 (Y111) interacts with substrate.

The protein belongs to the tRNA pseudouridine synthase TruA family.

It carries out the reaction uridine(38/39/40) in tRNA = pseudouridine(38/39/40) in tRNA. Its function is as follows. Formation of pseudouridine at positions 38, 39 and 40 in the anticodon stem and loop of transfer RNAs. This chain is tRNA pseudouridine synthase A, found in Methanosarcina barkeri (strain Fusaro / DSM 804).